We begin with the raw amino-acid sequence, 195 residues long: NADH-quinone oxidoreductase subunit B (195 aa).

C74, C75, C139, and C169 together coordinate [4Fe-4S] cluster.

The protein belongs to the complex I 20 kDa subunit family. As to quaternary structure, NDH-1 is composed of 14 different subunits. Subunits NuoB, C, D, E, F, and G constitute the peripheral sector of the complex. [4Fe-4S] cluster serves as cofactor.

It localises to the cell inner membrane. It catalyses the reaction a quinone + NADH + 5 H(+)(in) = a quinol + NAD(+) + 4 H(+)(out). Its function is as follows. NDH-1 shuttles electrons from NADH, via FMN and iron-sulfur (Fe-S) centers, to quinones in the respiratory chain. The immediate electron acceptor for the enzyme in this species is believed to be ubiquinone. Couples the redox reaction to proton translocation (for every two electrons transferred, four hydrogen ions are translocated across the cytoplasmic membrane), and thus conserves the redox energy in a proton gradient. The sequence is that of NADH-quinone oxidoreductase subunit B from Methylobacterium radiotolerans (strain ATCC 27329 / DSM 1819 / JCM 2831 / NBRC 15690 / NCIMB 10815 / 0-1).